Here is a 73-residue protein sequence, read N- to C-terminus: MSEKEAGIEVQGTVEEALAGGMYRVKVDQGPVVLAYASGKMKKFHIRIIPGDRVKLELSPYDLSRGRITYRDK.

The 73-residue stretch at 1-73 (MSEKEAGIEV…SRGRITYRDK (73 aa)) folds into the S1-like domain.

Belongs to the IF-1 family. Component of the 30S ribosomal translation pre-initiation complex which assembles on the 30S ribosome in the order IF-2 and IF-3, IF-1 and N-formylmethionyl-tRNA(fMet); mRNA recruitment can occur at any time during PIC assembly.

Its subcellular location is the cytoplasm. One of the essential components for the initiation of protein synthesis. Stabilizes the binding of IF-2 and IF-3 on the 30S subunit to which N-formylmethionyl-tRNA(fMet) subsequently binds. Helps modulate mRNA selection, yielding the 30S pre-initiation complex (PIC). Upon addition of the 50S ribosomal subunit IF-1, IF-2 and IF-3 are released leaving the mature 70S translation initiation complex. This chain is Translation initiation factor IF-1, found in Anaeromyxobacter dehalogenans (strain 2CP-C).